Here is a 308-residue protein sequence, read N- to C-terminus: Oxygen-dependent coproporphyrinogen-III oxidase (308 aa).

Ser100 provides a ligand contact to substrate. Residues His104 and His114 each contribute to the a divalent metal cation site. The Proton donor role is filled by His114. 116–118 (NFR) provides a ligand contact to substrate. Positions 153 and 183 each coordinate a divalent metal cation. The segment at 248–283 (YVEFNLVFDRGTIFGLQSGGRTESILSSMPPMATWK) is important for dimerization. 266-268 (GGR) serves as a coordination point for substrate.

The protein belongs to the aerobic coproporphyrinogen-III oxidase family. As to quaternary structure, homodimer. A divalent metal cation is required as a cofactor.

Its subcellular location is the cytoplasm. The enzyme catalyses coproporphyrinogen III + O2 + 2 H(+) = protoporphyrinogen IX + 2 CO2 + 2 H2O. The protein operates within porphyrin-containing compound metabolism; protoporphyrin-IX biosynthesis; protoporphyrinogen-IX from coproporphyrinogen-III (O2 route): step 1/1. Its function is as follows. Involved in the heme biosynthesis. Catalyzes the aerobic oxidative decarboxylation of propionate groups of rings A and B of coproporphyrinogen-III to yield the vinyl groups in protoporphyrinogen-IX. The polypeptide is Oxygen-dependent coproporphyrinogen-III oxidase (Francisella tularensis subsp. mediasiatica (strain FSC147)).